The chain runs to 701 residues: Elongation factor G (701 aa).

Residues 8-291 (SRYRNIGIVA…AVIDYLPAPI (284 aa)) enclose the tr-type G domain. Residues 17–24 (AHVDAGKT), 89–93 (DTPGH), and 143–146 (NKMD) contribute to the GTP site.

This sequence belongs to the TRAFAC class translation factor GTPase superfamily. Classic translation factor GTPase family. EF-G/EF-2 subfamily.

Its subcellular location is the cytoplasm. In terms of biological role, catalyzes the GTP-dependent ribosomal translocation step during translation elongation. During this step, the ribosome changes from the pre-translocational (PRE) to the post-translocational (POST) state as the newly formed A-site-bound peptidyl-tRNA and P-site-bound deacylated tRNA move to the P and E sites, respectively. Catalyzes the coordinated movement of the two tRNA molecules, the mRNA and conformational changes in the ribosome. This chain is Elongation factor G, found in Pseudomonas syringae pv. tomato (strain ATCC BAA-871 / DC3000).